The sequence spans 291 residues: Probable protein S-acyltransferase 12 (291 aa).

2 helical membrane-spanning segments follow: residues G14–V34 and L49–W69. Positions G111–F161 constitute a DHHC domain. C141 (S-palmitoyl cysteine intermediate) is an active-site residue. A run of 2 helical transmembrane segments spans residues F155 to L175 and L198 to M218.

The protein belongs to the DHHC palmitoyltransferase family.

Its subcellular location is the cell membrane. The catalysed reaction is L-cysteinyl-[protein] + hexadecanoyl-CoA = S-hexadecanoyl-L-cysteinyl-[protein] + CoA. Palmitoyl acyltransferase. The sequence is that of Probable protein S-acyltransferase 12 (PAT12) from Arabidopsis thaliana (Mouse-ear cress).